Here is a 209-residue protein sequence, read N- to C-terminus: Small ribosomal subunit protein uS4 (209 aa).

The 69-residue stretch at 98–166 folds into the S4 RNA-binding domain; the sequence is RRLDNVVYRL…IKQAIELNKG (69 aa).

Belongs to the universal ribosomal protein uS4 family. As to quaternary structure, part of the 30S ribosomal subunit. Contacts protein S5. The interaction surface between S4 and S5 is involved in control of translational fidelity.

One of the primary rRNA binding proteins, it binds directly to 16S rRNA where it nucleates assembly of the body of the 30S subunit. In terms of biological role, with S5 and S12 plays an important role in translational accuracy. This is Small ribosomal subunit protein uS4 from Fervidobacterium nodosum (strain ATCC 35602 / DSM 5306 / Rt17-B1).